Here is a 160-residue protein sequence, read N- to C-terminus: Nucleotide-binding protein Ping_2261 (160 aa).

It belongs to the YajQ family.

Functionally, nucleotide-binding protein. The sequence is that of Nucleotide-binding protein Ping_2261 from Psychromonas ingrahamii (strain DSM 17664 / CCUG 51855 / 37).